We begin with the raw amino-acid sequence, 811 residues long: Ribonucleoside-diphosphate reductase large chain (811 aa).

The region spanning 1–92 (MFVYKRDGRQ…VSNLHKQTEK (92 aa)) is the ATP-cone domain. ATP contacts are provided by residues 5–6 (KR), 11–17 (EKVAFDK), threonine 53, and aspartate 57. 2 residues coordinate GDP: serine 202 and serine 217. Cysteines 218 and 444 form a disulfide. Residues 226–228 (DSI), lysine 243, arginine 256, and 263–264 (AG) each bind dTTP. Asparagine 427 serves as a coordination point for GDP. The Proton acceptor role is filled by asparagine 427. Catalysis depends on cysteine 429, which acts as the Cysteine radical intermediate. Residues glutamate 431 and 603 to 606 (TAST) each bind GDP. The active-site Proton acceptor is glutamate 431.

It belongs to the ribonucleoside diphosphate reductase large chain family. Heterodimer of a large and a small subunit. Interacts with SPD1.

It catalyses the reaction a 2'-deoxyribonucleoside 5'-diphosphate + [thioredoxin]-disulfide + H2O = a ribonucleoside 5'-diphosphate + [thioredoxin]-dithiol. Under complex allosteric control mediated by deoxynucleoside triphosphates and ATP binding to separate specificity and activation sites on the large subunit. The type of nucleotide bound at the specificity site determines substrate preference. It seems probable that ATP makes the enzyme reduce CDP and UDP, dGTP favors ADP reduction and dTTP favors GDP reduction. Stimulated by ATP and inhibited by dATP binding to the activity site. Provides the precursors necessary for DNA synthesis. Catalyzes the biosynthesis of deoxyribonucleotides from the corresponding ribonucleotides. The protein is Ribonucleoside-diphosphate reductase large chain (cdc22) of Schizosaccharomyces pombe (strain 972 / ATCC 24843) (Fission yeast).